The chain runs to 150 residues: SsrA-binding protein (150 aa).

The disordered stretch occupies residues 129-150 (KRQTLKSKEADREMARALRDRH).

The protein belongs to the SmpB family.

It is found in the cytoplasm. Functionally, required for rescue of stalled ribosomes mediated by trans-translation. Binds to transfer-messenger RNA (tmRNA), required for stable association of tmRNA with ribosomes. tmRNA and SmpB together mimic tRNA shape, replacing the anticodon stem-loop with SmpB. tmRNA is encoded by the ssrA gene; the 2 termini fold to resemble tRNA(Ala) and it encodes a 'tag peptide', a short internal open reading frame. During trans-translation Ala-aminoacylated tmRNA acts like a tRNA, entering the A-site of stalled ribosomes, displacing the stalled mRNA. The ribosome then switches to translate the ORF on the tmRNA; the nascent peptide is terminated with the 'tag peptide' encoded by the tmRNA and targeted for degradation. The ribosome is freed to recommence translation, which seems to be the essential function of trans-translation. The polypeptide is SsrA-binding protein (Syntrophotalea carbinolica (strain DSM 2380 / NBRC 103641 / GraBd1) (Pelobacter carbinolicus)).